The chain runs to 359 residues: SAGA complex subunit Spt7 (359 aa).

In terms of assembly, component of the Spt-Ada-Gcn5 acetyltransferase (SAGA) complex consisting of wda/Taf5L, Saf6, Taf9, Taf10b, Taf12, Ada1, Spt3, Spt7, Spt20, Sf3b3, Sf3b5, Nipped-A/Tra1, a histone acetyltransferase (HAT) module made up of Gcn5, Ada2b (Isoform B), Ada3 and Sgf29, and a deubiquitinase (DUB) module made up of not/nonstop, Sgf11 and e(y)2 tethered to SAGA by Atxn7. Interacts with Ada2b; the interaction is direct.

Its subcellular location is the nucleus. Its function is as follows. Component of the transcription regulatory complex SAGA, a multiprotein complex that activates transcription by remodeling chromatin and mediating histone acetylation and deubiquitination. The SAGA complex predominantly acetylates histone H3. In Drosophila melanogaster (Fruit fly), this protein is SAGA complex subunit Spt7.